A 322-amino-acid polypeptide reads, in one-letter code: DNA repair and recombination protein RadA (322 aa).

105 to 112 (GMYGSGKT) contacts ATP.

This sequence belongs to the eukaryotic RecA-like protein family.

Functionally, involved in DNA repair and in homologous recombination. Binds and assemble on single-stranded DNA to form a nucleoprotein filament. Hydrolyzes ATP in a ssDNA-dependent manner and promotes DNA strand exchange between homologous DNA molecules. The polypeptide is DNA repair and recombination protein RadA (Methanococcus maripaludis (strain C6 / ATCC BAA-1332)).